We begin with the raw amino-acid sequence, 729 residues long: Fatty acid oxidation complex subunit alpha (729 aa).

Residues 1–189 are enoyl-CoA hydratase/isomerase; sequence MLYQSETLQL…KIGLVDAVVD (189 aa). Asp296 contacts substrate. The interval 311-729 is 3-hydroxyacyl-CoA dehydrogenase; it reads AAPKLAAVLG…LLDVSTNQPA (419 aa). Residues Met324, Asp343, 400–402, Lys407, and Ser429 contribute to the NAD(+) site; that span reads VVE. The active-site For 3-hydroxyacyl-CoA dehydrogenase activity is His450. NAD(+) is bound at residue Asn453. The substrate site is built by Asn500 and Tyr660.

In the N-terminal section; belongs to the enoyl-CoA hydratase/isomerase family. This sequence in the C-terminal section; belongs to the 3-hydroxyacyl-CoA dehydrogenase family. Heterotetramer of two alpha chains (FadB) and two beta chains (FadA).

It catalyses the reaction a (3S)-3-hydroxyacyl-CoA + NAD(+) = a 3-oxoacyl-CoA + NADH + H(+). The enzyme catalyses a (3S)-3-hydroxyacyl-CoA = a (2E)-enoyl-CoA + H2O. It carries out the reaction a 4-saturated-(3S)-3-hydroxyacyl-CoA = a (3E)-enoyl-CoA + H2O. The catalysed reaction is (3S)-3-hydroxybutanoyl-CoA = (3R)-3-hydroxybutanoyl-CoA. It catalyses the reaction a (3Z)-enoyl-CoA = a 4-saturated (2E)-enoyl-CoA. The enzyme catalyses a (3E)-enoyl-CoA = a 4-saturated (2E)-enoyl-CoA. It participates in lipid metabolism; fatty acid beta-oxidation. In terms of biological role, involved in the aerobic and anaerobic degradation of long-chain fatty acids via beta-oxidation cycle. Catalyzes the formation of 3-oxoacyl-CoA from enoyl-CoA via L-3-hydroxyacyl-CoA. It can also use D-3-hydroxyacyl-CoA and cis-3-enoyl-CoA as substrate. This is Fatty acid oxidation complex subunit alpha from Yersinia pestis bv. Antiqua (strain Antiqua).